We begin with the raw amino-acid sequence, 393 residues long: Cytotoxic and regulatory T-cell molecule (393 aa).

Residues 1–17 (MWWRVLSLLAWFPLQEA) form the signal peptide. In terms of domain architecture, Ig-like V-type spans 18-114 (SLTNHTETIT…VSTKEVKVIV (97 aa)). The Extracellular segment spans residues 18 to 287 (SLTNHTETIT…YLGLARKKSG (270 aa)). Residues N21, N87, and N178 are each glycosylated (N-linked (GlcNAc...) asparagine). Cystine bridges form between C38–C98 and C141–C196. The Ig-like C2-type domain occupies 118-210 (PFKPILEASV…RGLQGRKLVA (93 aa)). Residues 225 to 273 (SDALERNSLSSQDPQQPTSTVSVTEDSSTSEIDKEEKEQTTQDPDLTTE) form a disordered region. The span at 231-241 (NSLSSQDPQQP) shows a compositional bias: polar residues. Residues 242–254 (TSTVSVTEDSSTS) show a composition bias toward low complexity. Residues 255-264 (EIDKEEKEQT) are compositionally biased toward basic and acidic residues. Residues 288 to 308 (ILLLTLVSFLIFILFIIVQLF) traverse the membrane as a helical segment. Over 309-393 (IMKLRKAHVI…KHIQVPESIV (85 aa)) the chain is Cytoplasmic. 2 stretches are compositionally biased toward basic and acidic residues: residues 328–348 (HTLE…EEKN) and 374–387 (ENVQ…KHIQ). Disordered regions lie at residues 328 to 354 (HTLE…SSHP) and 374 to 393 (ENVQ…ESIV). A PDZ-binding motif is present at residues 390–393 (ESIV).

The protein belongs to the nectin family. In terms of assembly, monomer. May form homodimer (via Ig-like V-type domain). Interacts (via Ig-like V-type domain) with CADM1 (via Ig-like V-type domain); the interaction competes with CRTAM homodimerization and CADM1 homodimerization. Interacts (via PDZ-binding motif) with SCRIB (via PDZ domain 3); the interaction promotes CRTAM and SCRIB polarization in a subset of CD4+ T-cells. As to expression, in the immune system, expression is restricted to activated class-I MHC-restricted cells, including NKT and CD8 T-cells. Strongly expressed in spleen, thymus, small intestine, peripheral blood leukocyte, and in Purkinje neurons in cerebellum. Expressed at much lower levels in testis, ovary, colon, lung and lymphoid tissues.

It localises to the cell membrane. Mediates heterophilic cell-cell adhesion which regulates the activation, differentiation and tissue retention of various T-cell subsets. Interaction with CADM1 promotes natural killer (NK) cell cytotoxicity and IFNG/interferon-gamma secretion by CD8+ T-cells in vitro as well as NK cell-mediated rejection of tumors expressing CADM1 in vivo. Regulates CD8+ T-cell proliferation in response to T-cell receptor (TCR) activation. Appears to be dispensable for CD8+ T-cell-mediated cytotoxicity. Interaction with SCRIB promotes the late phase of cellular polarization of a subset of CD4+ T-cells, which in turn regulates TCR-mediated proliferation and IFNG, IL17 and IL22 production. By interacting with CADM1 on CD8+ dendritic cells, regulates the retention of activated CD8+ T-cells within the draining lymph node. Required for the intestinal retention of intraepithelial CD4+ CD8+ T-cells and, to a lesser extent, intraepithelial and lamina propria CD8+ T-cells and CD4+ T-cells. Interaction with CADM1 promotes the adhesion to gut-associated CD103+ dendritic cells, which may facilitate the expression of gut-homing and adhesion molecules on T-cells and the conversion of CD4+ T-cells into CD4+ CD8+ T-cells. This is Cytotoxic and regulatory T-cell molecule from Homo sapiens (Human).